Consider the following 294-residue polypeptide: Store-operated calcium entry regulator STIMATE (294 aa).

The segment at 1-22 (MQGPAGNASRGLPGGPPSTVAS) is disordered. Over 1 to 28 (MQGPAGNASRGLPGGPPSTVASGAGRCE) the chain is Cytoplasmic. The next 3 helical transmembrane spans lie at 29-49 (SGAL…VVAF), 69-89 (IWFL…FANV), and 102-122 (LYLI…YVGV). Positions 149–153 (GAWVG) match the GXXXG motif motif. The next 2 helical transmembrane spans lie at 156–176 (ALYI…LLIL) and 194–214 (LAIV…WVVD). Topologically, residues 215–294 (NFLMRKGKTK…KKKHRFGLPV (80 aa)) are cytoplasmic. The tract at residues 227–268 (LEERGANQDSRNGSKVRYRRAASHEESESEILISADDEMEES) is disordered. Residues 241 to 246 (KVRYRR) form a required for localization in the endoplasmic reticulum region.

Belongs to the STIMATE family. Homooligomer. Interacts with STIM1. In terms of tissue distribution, widely expressed.

It is found in the endoplasmic reticulum membrane. Its function is as follows. Acts as a regulator of store-operated Ca(2+) entry (SOCE) at junctional sites that connect the endoplasmic reticulum (ER) and plasma membrane (PM), called ER-plasma membrane (ER-PM) junction or cortical ER. SOCE is a Ca(2+) influx following depletion of intracellular Ca(2+) stores. Acts by interacting with STIM1, promoting STIM1 conformational switch. Involved in STIM1 relocalization to ER-PM junctions. Contributes to the maintenance and reorganization of store-dependent ER-PM junctions. The protein is Store-operated calcium entry regulator STIMATE of Homo sapiens (Human).